The primary structure comprises 64 residues: Large ribosomal subunit protein bL35 (64 aa).

The protein belongs to the bacterial ribosomal protein bL35 family.

The chain is Large ribosomal subunit protein bL35 from Mycoplasmopsis pulmonis (strain UAB CTIP) (Mycoplasma pulmonis).